The sequence spans 303 residues: Signal recognition particle receptor FtsY (303 aa).

GTP is bound by residues 108 to 115 (GVNGAGKT), 190 to 194 (DTAGR), and 254 to 257 (TKLD).

Belongs to the GTP-binding SRP family. FtsY subfamily. Part of the signal recognition particle protein translocation system, which is composed of SRP and FtsY. SRP is a ribonucleoprotein composed of Ffh and a 4.5S RNA molecule.

The protein localises to the cell inner membrane. It is found in the cytoplasm. It carries out the reaction GTP + H2O = GDP + phosphate + H(+). In terms of biological role, involved in targeting and insertion of nascent membrane proteins into the cytoplasmic membrane. Acts as a receptor for the complex formed by the signal recognition particle (SRP) and the ribosome-nascent chain (RNC). Interaction with SRP-RNC leads to the transfer of the RNC complex to the Sec translocase for insertion into the membrane, the hydrolysis of GTP by both Ffh and FtsY, and the dissociation of the SRP-FtsY complex into the individual components. The polypeptide is Signal recognition particle receptor FtsY (Rickettsia bellii (strain RML369-C)).